We begin with the raw amino-acid sequence, 230 residues long: Lactate utilization protein C (230 aa).

This sequence belongs to the LutC/YkgG family.

Functionally, is involved in L-lactate degradation and allows cells to grow with lactate as the sole carbon source. The sequence is that of Lactate utilization protein C from Exiguobacterium sp. (strain ATCC BAA-1283 / AT1b).